An 84-amino-acid polypeptide reads, in one-letter code: RNA-binding protein Hfq (84 aa).

The region spanning 11–71 (DTFLNHVRKN…ISTIMPGHPV (61 aa)) is the Sm domain.

It belongs to the Hfq family. Homohexamer.

In terms of biological role, RNA chaperone that binds small regulatory RNA (sRNAs) and mRNAs to facilitate mRNA translational regulation in response to envelope stress, environmental stress and changes in metabolite concentrations. Also binds with high specificity to tRNAs. The polypeptide is RNA-binding protein Hfq (Methylobacterium nodulans (strain LMG 21967 / CNCM I-2342 / ORS 2060)).